Consider the following 119-residue polypeptide: Large ribosomal subunit protein bL20 (119 aa).

This sequence belongs to the bacterial ribosomal protein bL20 family.

Its function is as follows. Binds directly to 23S ribosomal RNA and is necessary for the in vitro assembly process of the 50S ribosomal subunit. It is not involved in the protein synthesizing functions of that subunit. The polypeptide is Large ribosomal subunit protein bL20 (Metamycoplasma arthritidis (strain 158L3-1) (Mycoplasma arthritidis)).